The following is a 520-amino-acid chain: NADH-quinone oxidoreductase subunit N (520 aa).

The next 14 helical transmembrane spans lie at A13 to W33, F55 to A75, G87 to L107, A115 to L135, L141 to V161, F176 to A196, F219 to F239, A250 to F270, W285 to L305, M313 to D333, A339 to I359, W383 to G403, I425 to V445, and S468 to M488. Low complexity predominate over residues A494–R508. The tract at residues A494–R520 is disordered.

It belongs to the complex I subunit 2 family. NDH-1 is composed of 14 different subunits. Subunits NuoA, H, J, K, L, M, N constitute the membrane sector of the complex.

The protein resides in the cell inner membrane. The catalysed reaction is a quinone + NADH + 5 H(+)(in) = a quinol + NAD(+) + 4 H(+)(out). NDH-1 shuttles electrons from NADH, via FMN and iron-sulfur (Fe-S) centers, to quinones in the respiratory chain. The immediate electron acceptor for the enzyme in this species is believed to be ubiquinone. Couples the redox reaction to proton translocation (for every two electrons transferred, four hydrogen ions are translocated across the cytoplasmic membrane), and thus conserves the redox energy in a proton gradient. This is NADH-quinone oxidoreductase subunit N from Gemmatimonas aurantiaca (strain DSM 14586 / JCM 11422 / NBRC 100505 / T-27).